A 511-amino-acid chain; its full sequence is Cytochrome P450 76C4 (511 aa).

A helical membrane pass occupies residues 3 to 23 (IISGQALFLLFCFISSCFLIS). Residue Cys450 participates in heme binding.

This sequence belongs to the cytochrome P450 family. Requires heme as cofactor.

It localises to the membrane. The sequence is that of Cytochrome P450 76C4 (CYP76C4) from Arabidopsis thaliana (Mouse-ear cress).